The chain runs to 284 residues: 2-dehydro-3-deoxyphosphooctonate aldolase (284 aa).

It belongs to the KdsA family.

It localises to the cytoplasm. The enzyme catalyses D-arabinose 5-phosphate + phosphoenolpyruvate + H2O = 3-deoxy-alpha-D-manno-2-octulosonate-8-phosphate + phosphate. Its pathway is carbohydrate biosynthesis; 3-deoxy-D-manno-octulosonate biosynthesis; 3-deoxy-D-manno-octulosonate from D-ribulose 5-phosphate: step 2/3. It participates in bacterial outer membrane biogenesis; lipopolysaccharide biosynthesis. The chain is 2-dehydro-3-deoxyphosphooctonate aldolase from Cronobacter sakazakii (strain ATCC BAA-894) (Enterobacter sakazakii).